The following is a 99-amino-acid chain: DNA/RNA-binding protein Alba 1 (99 aa).

At Lys17 the chain carries N6-acetyllysine.

The protein belongs to the histone-like Alba family. Acetylated. Acetylation at Lys-17 decreases DNA-binding affinity.

It localises to the cytoplasm. It is found in the chromosome. Its function is as follows. Binds double-stranded DNA tightly but without sequence specificity. Involved in DNA compaction. The sequence is that of DNA/RNA-binding protein Alba 1 from Sulfurisphaera tokodaii (strain DSM 16993 / JCM 10545 / NBRC 100140 / 7) (Sulfolobus tokodaii).